The primary structure comprises 440 residues: MSALIIFGLLIALMLTGMPISISLGLTVLTFLFTMTQVPIDTVALKLFTGIEKFEIMAIPFFILAGNFLTHGGVAKRMINFATAMVGHWHGGLGLAGVIACALFAAVSGSSPATVVAIGSVILPAMVNQGFPKQFGAGVITTSGALGILIPPSIVMVMYAVATSGMVVTGPDGQPVSSASVGELFMAGVVPGLMLAGFLAFTTWNRARKFGYPRLEKASLRQRWTAFREAAWGLMLIVVVIGGIYAGIFTPTEAAAMSAVYAFFISVFVYKDLTLRDVPRVLLSSANMSAMLLYIITNAVLFSFLMAHEGIPQALGEWMVNAGLSWWMFLIIVNILLLAAGNFMEPSSIVLIMAPILFPVAVRLGIDPVHFGIMIVVNMEVGMCHPPVGLNLYVASGITKMGITELTVAVWPWLLTMLAFLVLVTYVPAISLALPNLLGM.

A run of 13 helical transmembrane segments spans residues 4 to 24 (LIIF…SISL), 54 to 74 (FEIM…HGGV), 89 to 109 (WHGG…AVSG), 112 to 132 (PATV…QGFP), 148 to 168 (ILIP…GMVV), 181 to 201 (VGEL…FLAF), 230 to 250 (AAWG…GIFT), 255 to 275 (AAMS…DLTL), 291 to 311 (MLLY…HEGI), 318 to 338 (WMVN…ILLL), 349 to 369 (IVLI…IDPV), 370 to 390 (HFGI…PVGL), and 410 to 430 (VWPW…VPAI).

The protein belongs to the TRAP transporter large permease family. The complex comprises the extracytoplasmic solute receptor protein DctP, and the two transmembrane proteins DctQ and DctM.

Its subcellular location is the cell inner membrane. Its function is as follows. Part of the tripartite ATP-independent periplasmic (TRAP) transport system DctPQM involved in C4-dicarboxylates uptake. The sequence is that of C4-dicarboxylate TRAP transporter large permease protein DctM from Rhodobacter capsulatus (Rhodopseudomonas capsulata).